We begin with the raw amino-acid sequence, 167 residues long: Small ribosomal subunit protein uS5 (167 aa).

Residues 11 to 74 (LQEKLIAVNR…DKARRNMTTI (64 aa)) enclose the S5 DRBM domain.

This sequence belongs to the universal ribosomal protein uS5 family. Part of the 30S ribosomal subunit. Contacts proteins S4 and S8.

Functionally, with S4 and S12 plays an important role in translational accuracy. In terms of biological role, located at the back of the 30S subunit body where it stabilizes the conformation of the head with respect to the body. The sequence is that of Small ribosomal subunit protein uS5 from Baumannia cicadellinicola subsp. Homalodisca coagulata.